Here is a 99-residue protein sequence, read N- to C-terminus: Cytochrome c-555 (99 aa).

Cysteine 23, cysteine 26, histidine 27, and methionine 73 together coordinate heme c.

In terms of processing, binds 1 heme c group covalently per subunit.

This chain is Cytochrome c-555, found in Prosthecochloris aestuarii.